Consider the following 381-residue polypeptide: Molybdenum import ATP-binding protein ModC (381 aa).

An ABC transporter domain is found at Ser-5–Asp-238. Gly-37–Ser-44 contributes to the ATP binding site. In terms of domain architecture, Mop spans Asn-297–Arg-367.

Belongs to the ABC transporter superfamily. Molybdate importer (TC 3.A.1.8) family. The complex is composed of two ATP-binding proteins (ModC), two transmembrane proteins (ModB) and a solute-binding protein (ModA).

The protein resides in the cell inner membrane. It carries out the reaction molybdate(out) + ATP + H2O = molybdate(in) + ADP + phosphate + H(+). Functionally, part of the ABC transporter complex ModABC involved in molybdenum import. Responsible for energy coupling to the transport system. In Rhodopseudomonas palustris (strain BisB18), this protein is Molybdenum import ATP-binding protein ModC.